The sequence spans 101 residues: MAKLSSINKNERRKKLVEKYAAKYAALKATADDQSLDETERLIARLKMAELPRNANPTRVRNRCNTTGRPRGYYRKFGLCRIELRDLANKGLIPGVTKSSW.

The protein belongs to the universal ribosomal protein uS14 family. Part of the 30S ribosomal subunit. Contacts proteins S3 and S10.

Functionally, binds 16S rRNA, required for the assembly of 30S particles and may also be responsible for determining the conformation of the 16S rRNA at the A site. The polypeptide is Small ribosomal subunit protein uS14 (Novosphingobium aromaticivorans (strain ATCC 700278 / DSM 12444 / CCUG 56034 / CIP 105152 / NBRC 16084 / F199)).